The primary structure comprises 700 residues: mRNA cap guanine-N(7) methyltransferase (700 aa).

2 stretches are compositionally biased toward basic and acidic residues: residues 1–10 (MVYDPIRDCD) and 52–67 (EPPRAASVHEDAESHR). Disordered regions lie at residues 1-263 (MVYD…SVLR) and 277-392 (AHAN…ERNK). A compositionally biased stretch (polar residues) spans 113–128 (RSPSMSLSPRSQNQSL). 2 stretches are compositionally biased toward low complexity: residues 129–144 (PYPSSRPGSAAGSAHP) and 220–241 (PQPTTTPSSPSTSQHTPYTPHH). An mRNA cap 0 methyltransferase domain is found at 429–700 (SPIIGLKKFN…LYMGFAFEKM (272 aa)). Position 438–439 (438–439 (NN)) interacts with mRNA. Residues Lys-442, Gly-461, Asp-483, Asp-512, Gln-538, and Tyr-543 each coordinate S-adenosyl-L-methionine.

Belongs to the class I-like SAM-binding methyltransferase superfamily. mRNA cap 0 methyltransferase family.

It localises to the nucleus. The enzyme catalyses a 5'-end (5'-triphosphoguanosine)-ribonucleoside in mRNA + S-adenosyl-L-methionine = a 5'-end (N(7)-methyl 5'-triphosphoguanosine)-ribonucleoside in mRNA + S-adenosyl-L-homocysteine. In terms of biological role, responsible for methylating the 5'-cap structure of mRNAs. This is mRNA cap guanine-N(7) methyltransferase (ABD1) from Cryptococcus neoformans var. neoformans serotype D (strain B-3501A) (Filobasidiella neoformans).